Consider the following 211-residue polypeptide: Probable endopeptidase cgR_2070 (211 aa).

An N-terminal signal peptide occupies residues M1–A35. Residues A97–F211 enclose the NlpC/P60 domain. C127 functions as the Nucleophile in the catalytic mechanism. The active-site Proton acceptor is H175. Residue H187 is part of the active site.

It belongs to the peptidase C40 family.

Its subcellular location is the secreted. The protein is Probable endopeptidase cgR_2070 of Corynebacterium glutamicum (strain R).